The sequence spans 406 residues: 2-epi-valiolone synthase (406 aa).

Residues 1-21 are disordered; that stretch reads MPSTGSTPILAHDVKSPHRGS. Residues 105 to 108, 137 to 141, 161 to 162, Lys-174, Lys-183, and 201 to 204 contribute to the NAD(+) site; these read EPSK, GVLCD, TS, and CLAT. 3 residues coordinate Zn(2+): Glu-216, His-287, and His-304.

This sequence belongs to the sugar phosphate cyclases superfamily. EVS family. NAD(+) serves as cofactor. Requires Co(2+) as cofactor. Zn(2+) is required as a cofactor.

It carries out the reaction D-sedoheptulose 7-phosphate = 2-epi-valiolone + phosphate. Its function is as follows. Catalyzes the conversion of sedoheptulose 7-phosphate to 2-epi-valiolone, which may serve as an alternative precursor for aminocyclitol biosynthesis. This is 2-epi-valiolone synthase from Stigmatella aurantiaca (strain DW4/3-1).